The primary structure comprises 163 residues: Crossover junction endodeoxyribonuclease RuvC (163 aa).

Active-site residues include D7, E67, and D140. Positions 7, 67, and 140 each coordinate Mg(2+).

It belongs to the RuvC family. In terms of assembly, homodimer which binds Holliday junction (HJ) DNA. The HJ becomes 2-fold symmetrical on binding to RuvC with unstacked arms; it has a different conformation from HJ DNA in complex with RuvA. In the full resolvosome a probable DNA-RuvA(4)-RuvB(12)-RuvC(2) complex forms which resolves the HJ. The cofactor is Mg(2+).

Its subcellular location is the cytoplasm. The catalysed reaction is Endonucleolytic cleavage at a junction such as a reciprocal single-stranded crossover between two homologous DNA duplexes (Holliday junction).. Functionally, the RuvA-RuvB-RuvC complex processes Holliday junction (HJ) DNA during genetic recombination and DNA repair. Endonuclease that resolves HJ intermediates. Cleaves cruciform DNA by making single-stranded nicks across the HJ at symmetrical positions within the homologous arms, yielding a 5'-phosphate and a 3'-hydroxyl group; requires a central core of homology in the junction. The consensus cleavage sequence is 5'-(A/T)TT(C/G)-3'. Cleavage occurs on the 3'-side of the TT dinucleotide at the point of strand exchange. HJ branch migration catalyzed by RuvA-RuvB allows RuvC to scan DNA until it finds its consensus sequence, where it cleaves and resolves the cruciform DNA. In Desulforamulus reducens (strain ATCC BAA-1160 / DSM 100696 / MI-1) (Desulfotomaculum reducens), this protein is Crossover junction endodeoxyribonuclease RuvC.